The primary structure comprises 918 residues: Cap-specific mRNA (nucleoside-2'-O-)-methyltransferase 1 (918 aa).

Positions 1-18 (MADRKSDEGEDEYQHKEQ) are enriched in basic and acidic residues. Disordered regions lie at residues 1 to 56 (MADR…EERA) and 62 to 81 (KRGY…EEEP). A compositionally biased stretch (polar residues) spans 19-30 (MVTNRTSSFQPK). Residues 43-56 (RAADRREEFMEERA) show a composition bias toward basic and acidic residues. Positions 68-80 (GDDEEDDFTAEEE) are enriched in acidic residues. The G-patch domain occupies 86 to 132 (PLTVAERLMAAMGHKAGEGLGKHGQGISEPIASSTQRGRTGLGHNAG). In terms of domain architecture, RrmJ-type SAM-dependent 2'-O-MTase spans 236-465 (FFQNRAAMKT…ERYITCKGLR (230 aa)). The S-adenosyl-L-methionine site is built by glycine 298 and aspartate 379. Lysine 419 serves as the catalytic Proton acceptor.

It carries out the reaction a 5'-end (N(7)-methyl 5'-triphosphoguanosine)-ribonucleoside in mRNA + S-adenosyl-L-methionine = a 5'-end (N(7)-methyl 5'-triphosphoguanosine)-(2'-O-methyl-ribonucleoside) in mRNA + S-adenosyl-L-homocysteine + H(+). Its function is as follows. S-adenosyl-L-methionine-dependent methyltransferase that mediates mRNA cap1 2'-O-ribose methylation to the 5'-cap structure of mRNAs. Methylates the ribose of the first nucleotide of a m(7)GpppG-capped mRNA to produce m(7)GpppNmp (cap1). Cap1 modification is linked to higher levels of translation. The polypeptide is Cap-specific mRNA (nucleoside-2'-O-)-methyltransferase 1 (Caenorhabditis elegans).